The sequence spans 485 residues: Argininosuccinate lyase (485 aa).

Belongs to the lyase 1 family. Argininosuccinate lyase subfamily.

It localises to the cytoplasm. The catalysed reaction is 2-(N(omega)-L-arginino)succinate = fumarate + L-arginine. It participates in amino-acid biosynthesis; L-arginine biosynthesis; L-arginine from L-ornithine and carbamoyl phosphate: step 3/3. The sequence is that of Argininosuccinate lyase from Nitrosopumilus maritimus (strain SCM1).